We begin with the raw amino-acid sequence, 202 residues long: Small ribosomal subunit protein uS4 (202 aa).

The segment at 15 to 43 (LGDLPGLTRKAAKRSNPPGQHGNARRKRS) is disordered. The 63-residue stretch at 90 to 152 (GRLDNVCFRL…KGSKKLAEGN (63 aa)) folds into the S4 RNA-binding domain.

This sequence belongs to the universal ribosomal protein uS4 family. As to quaternary structure, part of the 30S ribosomal subunit. Contacts protein S5. The interaction surface between S4 and S5 is involved in control of translational fidelity.

One of the primary rRNA binding proteins, it binds directly to 16S rRNA where it nucleates assembly of the body of the 30S subunit. Its function is as follows. With S5 and S12 plays an important role in translational accuracy. The sequence is that of Small ribosomal subunit protein uS4 from Prochlorococcus marinus (strain SARG / CCMP1375 / SS120).